Consider the following 624-residue polypeptide: Probable potassium transport system protein Kup (624 aa).

12 helical membrane passes run 13-33, 52-72, 102-122, 139-159, 170-190, 208-228, 249-269, 291-311, 339-359, 368-388, 399-419, and 421-441; these read LALGALGVVFGDIGTSPLYTM, ILSLIFWALILVVSLKYVLVI, WIIMSLGFLGASLFFGDSLIT, PALHPFILPLALGILVGLFAI, LFGPIMLLWFAVLGVLGAIGI, FFMTHGTAGFLILGAVVLAIT, WFGFVLPALVVNYFGQGALLL, MVALATAATVIASQAVISGAF, IYIPFVNWTLAAGVALLVLGF, AYGIAVTATFAIDTVLLALLM, TLVAAALFLTLDLAFFGANAV, and IPEGGWFPLVVAVVVFTILVT.

This sequence belongs to the HAK/KUP transporter (TC 2.A.72) family.

It localises to the cell inner membrane. The enzyme catalyses K(+)(in) + H(+)(in) = K(+)(out) + H(+)(out). Functionally, transport of potassium into the cell. Likely operates as a K(+):H(+) symporter. The chain is Probable potassium transport system protein Kup from Thiobacillus denitrificans (strain ATCC 25259 / T1).